The primary structure comprises 1221 residues: Coatomer subunit alpha (1221 aa).

WD repeat units lie at residues 7–46 (TKAS…LLEK), 49–88 (EHEG…CLFT), 91–130 (GHKD…CIAE), 133–172 (GHNH…KKMT), 202–241 (GHDR…VDTF), 243–282 (GHYN…TVHM), 285–323 (RDHD…PLFV), 358–399 (PSNN…SNTV), and 528–567 (WDDN…TGVK). The interval 820 to 885 (GVEQSTSTPT…DDGGWERDDL (66 aa)) is disordered. Positions 844-857 (SQQQSSQQQQQQQQ) are enriched in low complexity. The WD 10 repeat unit spans residues 910 to 953 (PQPGPSFSMIWARNSQFAVDHIAAGSFESAMNILNSQIGAVNFD).

As to quaternary structure, oligomeric complex that consists of at least the alpha, beta, beta', gamma, delta, epsilon and zeta subunits.

The protein resides in the cytoplasm. Its subcellular location is the golgi apparatus membrane. In terms of biological role, the coatomer is a cytosolic protein complex that binds to dilysine motifs and reversibly associates with Golgi non-clathrin-coated vesicles, which further mediate biosynthetic protein transport from the ER, via the Golgi up to the trans Golgi network. Coatomer complex is required for budding from Golgi membranes, and is essential for the retrograde Golgi-to-ER transport of dilysine-tagged proteins. This is Coatomer subunit alpha (copa) from Dictyostelium discoideum (Social amoeba).